A 3095-amino-acid polypeptide reads, in one-letter code: HD protein homolog (3095 aa).

Disordered regions lie at residues 105-197 (PHQH…NGNA), 536-561 (QQQQ…TMSG), 1312-1371 (PPQQ…STVI), 1509-1547 (KSTS…TTPS), and 2005-2037 (KELT…KEEE). Residues 115 to 139 (STNLTDHLSQNSVTPSVPTTPNYQQ) show a composition bias toward polar residues. Low complexity-rich tracts occupy residues 140-197 (SPST…NGNA) and 536-551 (QQQQ…QQQQ). Positions 552–561 (HNLTSSTMSG) are enriched in polar residues. Low complexity-rich tracts occupy residues 1315–1368 (QQQQ…LNNS), 1510–1547 (STSS…TTPS), and 2008–2018 (TNNNNNNNNNI).

It belongs to the huntingtin family.

The protein resides in the cytoplasm. It localises to the nucleus. May play a role in microtubule-mediated transport or vesicle function. The protein is HD protein homolog (htt) of Dictyostelium discoideum (Social amoeba).